Consider the following 93-residue polypeptide: Large ribosomal subunit protein uL23 (93 aa).

Belongs to the universal ribosomal protein uL23 family. In terms of assembly, part of the 50S ribosomal subunit. Contacts protein L29, and trigger factor when it is bound to the ribosome.

Its function is as follows. One of the early assembly proteins it binds 23S rRNA. One of the proteins that surrounds the polypeptide exit tunnel on the outside of the ribosome. Forms the main docking site for trigger factor binding to the ribosome. The chain is Large ribosomal subunit protein uL23 from Campylobacter jejuni subsp. jejuni serotype O:6 (strain 81116 / NCTC 11828).